Consider the following 168-residue polypeptide: G/U mismatch-specific DNA glycosylase (168 aa).

Belongs to the uracil-DNA glycosylase (UDG) superfamily. TDG/mug family. Binds DNA as a monomer.

It is found in the cytoplasm. The catalysed reaction is Specifically hydrolyzes mismatched double-stranded DNA and polynucleotides, releasing free uracil.. Its function is as follows. Excises ethenocytosine and uracil, which can arise by alkylation or deamination of cytosine, respectively, from the corresponding mispairs with guanine in ds-DNA. It is capable of hydrolyzing the carbon-nitrogen bond between the sugar-phosphate backbone of the DNA and the mispaired base. The complementary strand guanine functions in substrate recognition. Required for DNA damage lesion repair in stationary-phase cells. The protein is G/U mismatch-specific DNA glycosylase of Salmonella choleraesuis (strain SC-B67).